Consider the following 822-residue polypeptide: Fibroblast growth factor receptor 1 (822 aa).

Positions 1-21 (MWSWKCLLFWAVLVTATLCTA) are cleaved as a signal peptide. The Extracellular portion of the chain corresponds to 22–376 (RPSPTLPEQA…AVMTSPLYLE (355 aa)). The Ig-like C2-type 1 domain occupies 25–119 (PTLPEQAQPW…DTTYFSVNVS (95 aa)). Cysteines 55 and 101 form a disulfide. Asn77 and Asn117 each carry an N-linked (GlcNAc...) asparagine glycan. Positions 120–154 (DALPSSEDDDDDDDSSSEEKETDNTKPNRMPVAPY) are disordered. A compositionally biased stretch (acidic residues) spans 125-135 (SEDDDDDDDSS). Positions 136 to 145 (SEEKETDNTK) are enriched in basic and acidic residues. Ig-like C2-type domains follow at residues 158–246 (PEKM…YQLD) and 255–357 (PILQ…AWLT). The interval 160 to 177 (KMEKKLHAVPAAKTVKFK) is heparin-binding. Cys178 and Cys230 are oxidised to a cystine. Asn227, Asn240, Asn264, Asn296, Asn317, and Asn330 each carry an N-linked (GlcNAc...) asparagine glycan. A disulfide bridge connects residues Cys277 and Cys341. A helical membrane pass occupies residues 377–397 (IIIYCTGAFLISCMVGSVIVY). The Cytoplasmic segment spans residues 398–822 (KMKSGTKKSD…QLANGGLKRR (425 aa)). Position 463 is a phosphotyrosine; by autocatalysis (Tyr463). Residues 478-767 (LVLGKPLGEG…VALTSNQEYL (290 aa)) form the Protein kinase domain. Residues 484–490 (LGEGCFG), Lys514, 562–564 (EYA), and Asn568 each bind ATP. Phosphotyrosine; by autocatalysis occurs at positions 583 and 585. Residue Asp623 is the Proton acceptor of the active site. ATP contacts are provided by Arg627 and Asp641. Tyr653, Tyr654, Tyr730, and Tyr766 each carry phosphotyrosine; by autocatalysis. The span at 778 to 792 (PSFPDTRSSTCSSGE) shows a compositional bias: polar residues. The segment at 778–822 (PSFPDTRSSTCSSGEDSVFSHEPLPEEPCLPRHPAQLANGGLKRR) is disordered.

The protein belongs to the protein kinase superfamily. Tyr protein kinase family. Fibroblast growth factor receptor subfamily. In terms of assembly, monomer. Homodimer after ligand binding. Interacts predominantly with FGF1 and FGF2, but can also interact with FGF3, FGF4, FGF5, FGF6, FGF8, FGF10, FGF19, FGF21, FGF22 and FGF23 (in vitro). Ligand specificity is determined by tissue-specific expression of isoforms, and differences in the third Ig-like domain are crucial for ligand specificity. Affinity for fibroblast growth factors (FGFs) is increased by heparan sulfate glycosaminoglycans that function as coreceptors. Likewise, KLB increases the affinity for FGF19, FGF21 and FGF23. Interacts (phosphorylated on Tyr-766) with PLCG1 (via SH2 domains). Interacts with FRS2. Interacts with RPS6KA1. Interacts (via C-terminus) with NEDD4 (via WW3 domain). Interacts with KL. Interacts with SHB (via SH2 domain). Interacts with GRB10. Interacts with ANOS1; this interaction does not interfere with FGF2-binding to FGFR1, but prevents binding of heparin-bound FGF2. Interacts with SOX2 and SOX3. Interacts with FLRT1, FLRT2 and FLRT3. Found in a ternary complex with FGF1 and ITGAV:ITGB3. In terms of processing, autophosphorylated. Binding of FGF family members together with heparan sulfate proteoglycan or heparin promotes receptor dimerization and autophosphorylation on tyrosine residues. Autophosphorylation occurs in trans between the two FGFR molecules present in the dimer and proceeds in a highly ordered manner. Initial autophosphorylation at Tyr-653 increases the kinase activity by a factor of 50 to 100. After this, Tyr-583 becomes phosphorylated, followed by phosphorylation of Tyr-463, Tyr-766, Tyr-583 and Tyr-585. In a third stage, Tyr-654 is autophosphorylated, resulting in a further tenfold increase of kinase activity. Phosphotyrosine residues provide docking sites for interacting proteins and so are crucial for FGFR1 function and its regulation. Ubiquitinated. FGFR1 is rapidly ubiquitinated by NEDD4 after autophosphorylation, leading to internalization and lysosomal degradation. CBL is recruited to activated FGFR1 via FRS2 and GRB2, and mediates ubiquitination and subsequent degradation of FGFR1. Post-translationally, N-glycosylated in the endoplasmic reticulum. The N-glycan chains undergo further maturation to an Endo H-resistant form in the Golgi apparatus. In terms of tissue distribution, detected in astrocytoma, neuroblastoma and adrenal cortex cell lines. Some isoforms are detected in foreskin fibroblast cell lines, however isoform 17, isoform 18 and isoform 19 are not detected in these cells.

The protein resides in the cell membrane. It is found in the nucleus. Its subcellular location is the cytoplasm. The protein localises to the cytosol. It localises to the cytoplasmic vesicle. The enzyme catalyses L-tyrosyl-[protein] + ATP = O-phospho-L-tyrosyl-[protein] + ADP + H(+). Its activity is regulated as follows. Present in an inactive conformation in the absence of bound ligand. Ligand binding leads to dimerization and activation by sequential autophosphorylation on tyrosine residues. Inhibited by ARQ 069; this compound maintains the kinase in an inactive conformation and inhibits autophosphorylation. Inhibited by PD173074. Its function is as follows. Tyrosine-protein kinase that acts as a cell-surface receptor for fibroblast growth factors and plays an essential role in the regulation of embryonic development, cell proliferation, differentiation and migration. Required for normal mesoderm patterning and correct axial organization during embryonic development, normal skeletogenesis and normal development of the gonadotropin-releasing hormone (GnRH) neuronal system. Phosphorylates PLCG1, FRS2, GAB1 and SHB. Ligand binding leads to the activation of several signaling cascades. Activation of PLCG1 leads to the production of the cellular signaling molecules diacylglycerol and inositol 1,4,5-trisphosphate. Phosphorylation of FRS2 triggers recruitment of GRB2, GAB1, PIK3R1 and SOS1, and mediates activation of RAS, MAPK1/ERK2, MAPK3/ERK1 and the MAP kinase signaling pathway, as well as of the AKT1 signaling pathway. Promotes phosphorylation of SHC1, STAT1 and PTPN11/SHP2. In the nucleus, enhances RPS6KA1 and CREB1 activity and contributes to the regulation of transcription. FGFR1 signaling is down-regulated by IL17RD/SEF, and by FGFR1 ubiquitination, internalization and degradation. In Homo sapiens (Human), this protein is Fibroblast growth factor receptor 1 (FGFR1).